Consider the following 342-residue polypeptide: Cellular tumor antigen p53 (342 aa).

A transcription activation (acidic) region spans residues 1 to 35; it reads MEEADLTLPLSQDTFHDLWNNVFLSTENESLPPPE. Residues 68-255 mediate DNA binding; the sequence is NYAGEHGFNL…KTEEGNLEKS (188 aa). Positions 142, 145, 201, and 205 each coordinate Zn(2+). An interaction with DNA region spans residues 236–243; sequence RVCACPGR. Basic and acidic residues predominate over residues 244–256; it reads DRKTEEGNLEKSG. The interval 244-287 is disordered; that stretch reads DRKTEEGNLEKSGTKQTKKRKSAPAPDTSTAKKSKSASSGEDED. A Bipartite nuclear localization signal motif is present at residues 261 to 278; it reads KKRKSAPAPDTSTAKKSK. Residues 271 to 282 show a composition bias toward low complexity; that stretch reads TSTAKKSKSASS. The segment at 288–317 is oligomerization; that stretch reads KEIYTLSIRGRNRYLWFKSLNDGLELMDKT. A Nuclear export signal motif is present at residues 302–313; it reads LWFKSLNDGLEL. A disordered region spans residues 318-342; that stretch reads GPKIKQEIPAPSSGKRLLKGGSDSD. The segment at 319-336 is basic (repression of DNA-binding); it reads PKIKQEIPAPSSGKRLLK.

The protein belongs to the p53 family. As to quaternary structure, binds DNA as a homotetramer. Zn(2+) is required as a cofactor.

Its subcellular location is the cytoplasm. It localises to the nucleus. Its function is as follows. Multifunctional transcription factor that induces cell cycle arrest, DNA repair or apoptosis upon binding to its target DNA sequence. Acts as a tumor suppressor in many tumor types; induces growth arrest or apoptosis depending on the physiological circumstances and cell type. Negatively regulates cell division by controlling expression of a set of genes required for this process. One of the activated genes is an inhibitor of cyclin-dependent kinases. Apoptosis induction seems to be mediated either by stimulation of BAX and FAS antigen expression, or by repression of Bcl-2 expression. The polypeptide is Cellular tumor antigen p53 (tp53) (Xiphophorus maculatus (Southern platyfish)).